Reading from the N-terminus, the 79-residue chain is Acyl carrier protein (79 aa).

The 76-residue stretch at 4-79 folds into the Carrier domain; the sequence is AEIKDKVYDI…QAIDYIVNKK (76 aa). An O-(pantetheine 4'-phosphoryl)serine modification is found at serine 39.

It belongs to the acyl carrier protein (ACP) family. In terms of processing, 4'-phosphopantetheine is transferred from CoA to a specific serine of apo-ACP by AcpS. This modification is essential for activity because fatty acids are bound in thioester linkage to the sulfhydryl of the prosthetic group.

The protein localises to the cytoplasm. It functions in the pathway lipid metabolism; fatty acid biosynthesis. Carrier of the growing fatty acid chain in fatty acid biosynthesis. The chain is Acyl carrier protein from Pelodictyon phaeoclathratiforme (strain DSM 5477 / BU-1).